We begin with the raw amino-acid sequence, 93 residues long: Small ribosomal subunit protein uS15 (93 aa).

It belongs to the universal ribosomal protein uS15 family. As to quaternary structure, part of the 30S ribosomal subunit. Forms a bridge to the 50S subunit in the 70S ribosome, contacting the 23S rRNA.

Its function is as follows. One of the primary rRNA binding proteins, it binds directly to 16S rRNA where it helps nucleate assembly of the platform of the 30S subunit by binding and bridging several RNA helices of the 16S rRNA. Forms an intersubunit bridge (bridge B4) with the 23S rRNA of the 50S subunit in the ribosome. In Ehrlichia ruminantium (strain Gardel), this protein is Small ribosomal subunit protein uS15.